Consider the following 159-residue polypeptide: Mating-type P-specific polypeptide Pi (159 aa).

The homeobox; TALE-type; partial DNA-binding region spans 103 to 159 (MTTVRGQCSKCTKPHLMRWLLLHYDNPYPSNSEFYDLSAATGLTRTQLRNWFSNRRR).

This sequence belongs to the TALE/M-ATYP homeobox family.

Its subcellular location is the nucleus. Mating type proteins are sequence specific DNA-binding proteins that act as master switches in yeast differentiation by controlling gene expression in a cell type-specific fashion. Required for meiosis, but plays no role in conjugation. In Schizosaccharomyces kambucha (Fission yeast), this protein is Mating-type P-specific polypeptide Pi (matPi).